A 1158-amino-acid chain; its full sequence is Type IV pilus biogenesis factor PilY1 (1158 aa).

An N-terminal signal peptide occupies residues 1–29 (MIHQITRAGKSLLAAGCTLSILFASDSYA). Asp-841, Asn-843, Asp-845, Ile-847, and Asp-849 together coordinate Ca(2+).

Belongs to the PilY1 family.

It is found in the fimbrium. It localises to the membrane. The protein localises to the cytoplasm. The protein resides in the cytosol. Involved in pilus assembly, twitching motility and adhesion to host cells. Primes type IV pili (T4P) assembly and is required for inclusion of minor pilins PilV, PilW and PilX to the surface pili. Stabilizes assembled pilus fibers likely by antagonizing retraction mediated by PilT. Calcium-binding and calcium release by PilY1 seem to be essential for twitching motility and for regulation of pilus retraction dynamics of PilT. Regulates surface-activated virulence possibly by acting as a surface-attachment mechanosensor. This is Type IV pilus biogenesis factor PilY1 from Pseudomonas aeruginosa (strain UCBPP-PA14).